The sequence spans 309 residues: Methionyl-tRNA formyltransferase (309 aa).

Position 110–113 (110–113 (SLLP)) interacts with (6S)-5,6,7,8-tetrahydrofolate.

Belongs to the Fmt family.

It carries out the reaction L-methionyl-tRNA(fMet) + (6R)-10-formyltetrahydrofolate = N-formyl-L-methionyl-tRNA(fMet) + (6S)-5,6,7,8-tetrahydrofolate + H(+). Its function is as follows. Attaches a formyl group to the free amino group of methionyl-tRNA(fMet). The formyl group appears to play a dual role in the initiator identity of N-formylmethionyl-tRNA by promoting its recognition by IF2 and preventing the misappropriation of this tRNA by the elongation apparatus. This Caldanaerobacter subterraneus subsp. tengcongensis (strain DSM 15242 / JCM 11007 / NBRC 100824 / MB4) (Thermoanaerobacter tengcongensis) protein is Methionyl-tRNA formyltransferase.